We begin with the raw amino-acid sequence, 632 residues long: Deoxynucleoside triphosphate triphosphohydrolase SAMHD1 (632 aa).

The interval 1-22 (MKGINGAKRVRHDASPSAQDGY) is disordered. In terms of domain architecture, SAM spans 44–107 (WDVEEVCLFL…LSCLRMLCQN (64 aa)). GTP-binding residues include Lys-113 and Val-114. Residue Asn-116 coordinates dGTP. 3 residues coordinate GTP: Asp-134, Gln-139, and Arg-142. The dGTP site is built by Gln-146, Leu-147, Val-153, and Arg-161. Gln-146 contacts dATP. Gln-146 is a dCTP binding site. Gln-146 serves as a coordination point for dTTP. Arg-161 is a dATP binding site. Arg-161 contributes to the dCTP binding site. Position 161 (Arg-161) interacts with dTTP. One can recognise an HD domain in the interval 161–321 (RFEHSIGVGY…GIDVDKWDYF (161 aa)). Mn(2+) contacts are provided by His-164, His-203, and Asp-204. 2 residues coordinate dATP: His-207 and His-212. DCTP contacts are provided by His-207 and His-212. DTTP contacts are provided by His-207 and His-212. His-230 is a catalytic residue. Position 316 (Asp-316) interacts with Mn(2+). The dGTP site is built by Lys-317, Tyr-320, Asp-324, Arg-338, Arg-357, Lys-359, Asn-363, Arg-371, Tyr-379, Gln-380, His-381, and Lys-382. Residues Lys-317, Tyr-320, and Asp-324 each coordinate dATP. 3 residues coordinate dCTP: Lys-317, Tyr-320, and Asp-324. DTTP contacts are provided by Lys-317, Tyr-320, and Asp-324. Arg-371 is a binding site for dATP. Arg-371 is a dCTP binding site. Gln-380 serves as a coordination point for dATP. Position 380 (Gln-380) interacts with dCTP. Gln-380 contributes to the dTTP binding site. GTP-binding residues include Arg-456, Lys-460, and Lys-529. A dGTP-binding site is contributed by Lys-529.

Belongs to the SAMHD1 family. As to quaternary structure, homodimer; in absence of GTP and dNTP. Homotetramer; in GTP- and dNTP-bound form. Interacts with rbbp8/CtIP. Zn(2+) is required as a cofactor.

The protein localises to the nucleus. It is found in the chromosome. The enzyme catalyses a 2'-deoxyribonucleoside 5'-triphosphate + H2O = a 2'-deoxyribonucleoside + triphosphate + H(+). It catalyses the reaction dATP + H2O = 2'-deoxyadenosine + triphosphate + H(+). It carries out the reaction dCTP + H2O = 2'-deoxycytidine + triphosphate + H(+). The catalysed reaction is dGTP + H2O = 2'-deoxyguanosine + triphosphate + H(+). The enzyme catalyses dTTP + H2O = thymidine + triphosphate + H(+). Allosterically activated and regulated via the combined actions of GTP and dNTPs (dATP, dGTP, dTTP and dCTP): Allosteric site 1 binds GTP, while allosteric site 2 binds dNTP. Allosteric activation promotes the formation of highly active homotetramers. In terms of biological role, protein that acts both as a host restriction factor involved in defense response to virus and as a regulator of DNA end resection at stalled replication forks. Has deoxynucleoside triphosphate (dNTPase) activity, which is required to restrict infection by viruses: dNTPase activity reduces cellular dNTP levels to levels too low for retroviral reverse transcription to occur, blocking early-stage virus replication in dendritic and other myeloid cells. Functions during S phase at stalled DNA replication forks to promote the resection of gapped or reversed forks: acts by stimulating the exonuclease activity of mre11, activating the ATR-CHK1 pathway and allowing the forks to restart replication. Ability to promote DNA end resection at stalled replication forks is independent of dNTPase activity. The chain is Deoxynucleoside triphosphate triphosphohydrolase SAMHD1 from Xenopus laevis (African clawed frog).